Here is a 257-residue protein sequence, read N- to C-terminus: Imidazole glycerol phosphate synthase subunit HisF (257 aa).

Catalysis depends on residues D11 and D130.

It belongs to the HisA/HisF family. Heterodimer of HisH and HisF.

It is found in the cytoplasm. It catalyses the reaction 5-[(5-phospho-1-deoxy-D-ribulos-1-ylimino)methylamino]-1-(5-phospho-beta-D-ribosyl)imidazole-4-carboxamide + L-glutamine = D-erythro-1-(imidazol-4-yl)glycerol 3-phosphate + 5-amino-1-(5-phospho-beta-D-ribosyl)imidazole-4-carboxamide + L-glutamate + H(+). The protein operates within amino-acid biosynthesis; L-histidine biosynthesis; L-histidine from 5-phospho-alpha-D-ribose 1-diphosphate: step 5/9. Functionally, IGPS catalyzes the conversion of PRFAR and glutamine to IGP, AICAR and glutamate. The HisF subunit catalyzes the cyclization activity that produces IGP and AICAR from PRFAR using the ammonia provided by the HisH subunit. This chain is Imidazole glycerol phosphate synthase subunit HisF, found in Vibrio cholerae serotype O1 (strain ATCC 39541 / Classical Ogawa 395 / O395).